Consider the following 1068-residue polypeptide: Sucrose-phosphate synthase (1068 aa).

2 disordered regions span residues 18 to 47 and 118 to 139; these read HTSS…GAHM and KEQE…SEGE. The segment covering 23–32 has biased composition (gly residues); it reads GAGGGGGGGD. Positions 118 to 128 are enriched in basic and acidic residues; it reads KEQEQVRREAT.

It belongs to the glycosyltransferase 1 family. Homodimer or homotetramer.

The catalysed reaction is beta-D-fructose 6-phosphate + UDP-alpha-D-glucose = sucrose 6(F)-phosphate + UDP + H(+). It functions in the pathway glycan biosynthesis; sucrose biosynthesis; sucrose from D-fructose 6-phosphate and UDP-alpha-D-glucose: step 1/2. Activity is regulated by phosphorylation and moderated by concentration of metabolites and light. In terms of biological role, plays a role in photosynthetic sucrose synthesis by catalyzing the rate-limiting step of sucrose biosynthesis from UDP-glucose and fructose- 6-phosphate. Involved in the regulation of carbon partitioning in the leaves of plants. May regulate the synthesis of sucrose and therefore play a major role as a limiting factor in the export of photoassimilates out of the leaf. Plays a role for sucrose availability that is essential for plant growth and fiber elongation. This chain is Sucrose-phosphate synthase, found in Zea mays (Maize).